The primary structure comprises 283 residues: Elongation factor Ts (283 aa).

The involved in Mg(2+) ion dislocation from EF-Tu stretch occupies residues threonine 79–valine 82.

Belongs to the EF-Ts family.

Its subcellular location is the cytoplasm. Functionally, associates with the EF-Tu.GDP complex and induces the exchange of GDP to GTP. It remains bound to the aminoacyl-tRNA.EF-Tu.GTP complex up to the GTP hydrolysis stage on the ribosome. In Pseudoalteromonas translucida (strain TAC 125), this protein is Elongation factor Ts.